We begin with the raw amino-acid sequence, 141 residues long: Large ribosomal subunit protein uL11 (141 aa).

It belongs to the universal ribosomal protein uL11 family. In terms of assembly, part of the ribosomal stalk of the 50S ribosomal subunit. Interacts with L10 and the large rRNA to form the base of the stalk. L10 forms an elongated spine to which L12 dimers bind in a sequential fashion forming a multimeric L10(L12)X complex. In terms of processing, one or more lysine residues are methylated.

Forms part of the ribosomal stalk which helps the ribosome interact with GTP-bound translation factors. In Ruegeria sp. (strain TM1040) (Silicibacter sp.), this protein is Large ribosomal subunit protein uL11.